The chain runs to 312 residues: MALFRYPRPLPSEITPRDMYLSRRSLIGGAAALGAVSATADAATLQTHPGPYSGNLTPTPHEDVTHYNNFYEFGMGKADPATQSQTFHPLPWTLEITGLVRKPVRLDVEQLLRSPAIEERIYRMRCVEAWSMVIPWDGIPLATLLKDADPDPHATHVAFESIVRPAEMPGQTEALSGIQWPYVEGLRLDEAMNPLTLLALGIYGETLPNQNGAPLRLVVPWKYGFKGIKSIQRIRLLDHEPPTTWNRLAPDEYGFYANVNPQVDHPRWSQATERVIGARSLFGATRQPTLMFNGYGEQVADLYRGMDLRKNF.

Positions Met-1–Ala-42 form a signal peptide, tat-type signal. Mo-molybdopterin is bound by residues Asn-68, Tyr-71–Glu-72, Cys-126, Ser-161, Asn-211, Arg-216, and Gly-227–Lys-229.

Belongs to the MsrP family. Heterodimer of a catalytic subunit (MsrP) and a heme-binding subunit (MsrQ). Mo-molybdopterin is required as a cofactor. In terms of processing, predicted to be exported by the Tat system. The position of the signal peptide cleavage has not been experimentally proven.

It is found in the periplasm. The enzyme catalyses L-methionyl-[protein] + a quinone + H2O = L-methionyl-(S)-S-oxide-[protein] + a quinol. It carries out the reaction L-methionyl-[protein] + a quinone + H2O = L-methionyl-(R)-S-oxide-[protein] + a quinol. Part of the MsrPQ system that repairs oxidized periplasmic proteins containing methionine sulfoxide residues (Met-O), using respiratory chain electrons. Thus protects these proteins from oxidative-stress damage caused by reactive species of oxygen and chlorine generated by the host defense mechanisms. MsrPQ is essential for the maintenance of envelope integrity under bleach stress, rescuing a wide series of structurally unrelated periplasmic proteins from methionine oxidation. The catalytic subunit MsrP is non-stereospecific, being able to reduce both (R-) and (S-) diastereoisomers of methionine sulfoxide. The sequence is that of Protein-methionine-sulfoxide reductase catalytic subunit MsrP from Gluconobacter oxydans (strain 621H) (Gluconobacter suboxydans).